The primary structure comprises 151 residues: MSEIFVNSIQKNKNDFAMQIAEYIKMSQKFAALKDNVFFNQKIAKAQSIGKDEALKSYDEVYFAHKKGYLIALDERGEMIDSLQFAEILSKNSQISFFIGGAYGLSENFKQKMDKIISLTKLTLAHKIAKLMLFEQIFRGLCINAGHPYHK.

Residues Leu73, Gly100, and 119-124 (LTKLTL) each bind S-adenosyl-L-methionine.

Belongs to the RNA methyltransferase RlmH family. Homodimer.

Its subcellular location is the cytoplasm. It catalyses the reaction pseudouridine(1915) in 23S rRNA + S-adenosyl-L-methionine = N(3)-methylpseudouridine(1915) in 23S rRNA + S-adenosyl-L-homocysteine + H(+). Functionally, specifically methylates the pseudouridine at position 1915 (m3Psi1915) in 23S rRNA. This Campylobacter hominis (strain ATCC BAA-381 / DSM 21671 / CCUG 45161 / LMG 19568 / NCTC 13146 / CH001A) protein is Ribosomal RNA large subunit methyltransferase H.